Reading from the N-terminus, the 169-residue chain is Peptide deformylase (169 aa).

Positions 91 and 133 each coordinate Fe cation. Residue glutamate 134 is part of the active site. Residue histidine 137 coordinates Fe cation.

This sequence belongs to the polypeptide deformylase family. Fe(2+) is required as a cofactor.

It carries out the reaction N-terminal N-formyl-L-methionyl-[peptide] + H2O = N-terminal L-methionyl-[peptide] + formate. Removes the formyl group from the N-terminal Met of newly synthesized proteins. Requires at least a dipeptide for an efficient rate of reaction. N-terminal L-methionine is a prerequisite for activity but the enzyme has broad specificity at other positions. The chain is Peptide deformylase from Escherichia coli (strain SMS-3-5 / SECEC).